The sequence spans 320 residues: MSFLNGTSLTPASFILNGIPGLEDVHLWISFPLCTMYSIAITGNFGLMYLIYCDEALHRPMYVFLALLSFTDVLMCTSTLPNTLFILWFNLKEIDFKACLAQMFFVHTFTGMESGVLMLMALDHCVAICFPLRYATILTNSVIAKAGFLTFLRGVMLVIPSTFLTKRLPYCKGNVIPHTYCDHMSVAKISCGNVRVNAIYGLIVALLIGGFDILCITISYTMILQAVVSLSSADARQKAFSTCTAHFCAIVLTYVPAFFTFFTHHFGGHTIPLHIHIIMANLYLLMPPTMNPIVYGVKTRQVRESVIRFFLKGKDNSHNF.

Residues 1–27 (MSFLNGTSLTPASFILNGIPGLEDVHL) are Extracellular-facing. Residue asparagine 5 is glycosylated (N-linked (GlcNAc...) asparagine). Residues 28-48 (WISFPLCTMYSIAITGNFGLM) form a helical membrane-spanning segment. Residues 49–56 (YLIYCDEA) are Cytoplasmic-facing. The chain crosses the membrane as a helical span at residues 57 to 77 (LHRPMYVFLALLSFTDVLMCT). The Extracellular portion of the chain corresponds to 78–101 (STLPNTLFILWFNLKEIDFKACLA). Cysteine 99 and cysteine 191 are oxidised to a cystine. Residues 102–122 (QMFFVHTFTGMESGVLMLMAL) form a helical membrane-spanning segment. The Cytoplasmic segment spans residues 123–141 (DHCVAICFPLRYATILTNS). A helical transmembrane segment spans residues 142 to 162 (VIAKAGFLTFLRGVMLVIPST). The Extracellular portion of the chain corresponds to 163 to 198 (FLTKRLPYCKGNVIPHTYCDHMSVAKISCGNVRVNA). The chain crosses the membrane as a helical span at residues 199–219 (IYGLIVALLIGGFDILCITIS). Over 220-239 (YTMILQAVVSLSSADARQKA) the chain is Cytoplasmic. Residues 240–260 (FSTCTAHFCAIVLTYVPAFFT) form a helical membrane-spanning segment. Topologically, residues 261–276 (FFTHHFGGHTIPLHIH) are extracellular. The helical transmembrane segment at 277–297 (IIMANLYLLMPPTMNPIVYGV) threads the bilayer. The Cytoplasmic segment spans residues 298-320 (KTRQVRESVIRFFLKGKDNSHNF).

The protein belongs to the G-protein coupled receptor 1 family.

It localises to the cell membrane. Its function is as follows. Odorant receptor. This Homo sapiens (Human) protein is Olfactory receptor 52N1 (OR52N1).